The following is a 274-amino-acid chain: Protein FAM210A (274 aa).

Polar residues predominate over residues 51 to 66; sequence KWLHSQPKQQDSSTKT. The segment at 51–91 is disordered; that stretch reads KWLHSQPKQQDSSTKTPVHDLPSGSQHQSEESSPSAKSSIS. The segment covering 81–91 has biased composition (low complexity); it reads ESSPSAKSSIS. Residues 105-217 form the DUF1279 domain; the sequence is DQSIGLLKRF…GYLSTPPLVK (113 aa). Residues 124 to 144 form a helical membrane-spanning segment; sequence VLIPVHLVTSSFWFGSFYYAA. Residues 221-274 are a coiled coil; it reads QDRMEETKELFTEKMEETRDIISGKMEETKDRISEKLQETKDRVAFRKKKNEEM.

The protein belongs to the FAM210 family.

The protein localises to the membrane. The protein resides in the mitochondrion. It is found in the cytoplasm. Its function is as follows. May play a role in the structure and strength of both muscle and bone. This Xenopus tropicalis (Western clawed frog) protein is Protein FAM210A (fam210a).